A 266-amino-acid polypeptide reads, in one-letter code: Undecaprenyl-diphosphatase (266 aa).

A run of 7 helical transmembrane segments spans residues 38 to 58 (SDMFNIVIQAGAILAVTIIYW), 80 to 100 (LIVAFLITAVLGLVVKKVLHF), 108 to 128 (PIAWALIIGGFWMIFAEWAAA), 136 to 156 (ITWLVAILVGIAQIVAGIFPG), 176 to 196 (AAATEFAFLVGIPTMYAASGY), 217 to 237 (IAFVVSTIVAFIAVKWLLAYI), and 245 to 265 (FAVYRIILGVLLLGMAATGLI).

It belongs to the UppP family.

It is found in the cell inner membrane. The catalysed reaction is di-trans,octa-cis-undecaprenyl diphosphate + H2O = di-trans,octa-cis-undecaprenyl phosphate + phosphate + H(+). In terms of biological role, catalyzes the dephosphorylation of undecaprenyl diphosphate (UPP). Confers resistance to bacitracin. The protein is Undecaprenyl-diphosphatase of Rhizobium leguminosarum bv. trifolii (strain WSM2304).